The primary structure comprises 360 residues: Phospho-N-acetylmuramoyl-pentapeptide-transferase (360 aa).

10 helical membrane-spanning segments follow: residues 25-45 (RGIL…PWMI), 73-93 (TMGG…WADL), 97-117 (YVWV…VDDY), 135-155 (FWQS…APSA), 170-190 (IPLG…SSNA), 199-219 (GLAI…CYLS), 236-256 (AGEL…FLWF), 263-283 (VFMG…MAVI), 288-308 (MVLF…VIQV), and 338-358 (VIVR…ATLK).

Belongs to the glycosyltransferase 4 family. MraY subfamily. The cofactor is Mg(2+).

The protein resides in the cell inner membrane. It carries out the reaction UDP-N-acetyl-alpha-D-muramoyl-L-alanyl-gamma-D-glutamyl-meso-2,6-diaminopimeloyl-D-alanyl-D-alanine + di-trans,octa-cis-undecaprenyl phosphate = di-trans,octa-cis-undecaprenyl diphospho-N-acetyl-alpha-D-muramoyl-L-alanyl-D-glutamyl-meso-2,6-diaminopimeloyl-D-alanyl-D-alanine + UMP. The protein operates within cell wall biogenesis; peptidoglycan biosynthesis. Its function is as follows. Catalyzes the initial step of the lipid cycle reactions in the biosynthesis of the cell wall peptidoglycan: transfers peptidoglycan precursor phospho-MurNAc-pentapeptide from UDP-MurNAc-pentapeptide onto the lipid carrier undecaprenyl phosphate, yielding undecaprenyl-pyrophosphoryl-MurNAc-pentapeptide, known as lipid I. This is Phospho-N-acetylmuramoyl-pentapeptide-transferase from Pseudomonas syringae pv. syringae (strain B728a).